Reading from the N-terminus, the 668-residue chain is Protein brown (668 aa).

Over 1-412 (MPMDEGDAQG…TEDLANIRSG (412 aa)) the chain is Cytoplasmic. Residues 31 to 328 (YSFWNECRKQ…FTEGFMQPKN (298 aa)) form the ABC transporter domain. 63–70 (GGSGAGKT) contributes to the ATP binding site. A helical transmembrane segment spans residues 413–433 (LIGFGFFMTTAVTLSLMYSGV). At 434–453 (GGLTQRTVQDVGGSIFMLSN) the chain is on the extracellular side. Residues 454-474 (EMIFTFSYGVTYIFPAALPII) traverse the membrane as a helical segment. The Cytoplasmic portion of the chain corresponds to 475–490 (RREVAEGTYSLSAYYV). Residues 491–511 (ALVLSFVPVAFFKGYMFLSVI) traverse the membrane as a helical segment. Residues 512 to 524 (YASIYYTRGFLLY) are Extracellular-facing. The chain crosses the membrane as a helical span at residues 525-545 (ITMGFLMSLSAIAAVGYGVFL). Topologically, residues 546–561 (SSLFETDKMASECAAP) are cytoplasmic. A helical membrane pass occupies residues 562 to 582 (FDLIFLIFGGTYMNVDSVPLL). At 583 to 637 (KYFSLFFYSNEALMYNFWIDIDNIACXVNDEHPCCQTGLEVLQQASFRTADYTFW) the chain is on the extracellular side. A helical transmembrane segment spans residues 638–658 (LDCASLLVVALVFHIVSFTLI). Over 659-668 (RRYINRSGYY) the chain is Cytoplasmic.

This sequence belongs to the ABC transporter superfamily. ABCG family. Eye pigment precursor importer (TC 3.A.1.204) subfamily. In terms of assembly, may form a heterodimer with w/white. Expressed in eyes.

The protein localises to the membrane. It carries out the reaction guanine(out) + ATP + H2O = guanine(in) + ADP + phosphate + H(+). The enzyme catalyses riboflavin(in) + ATP + H2O = riboflavin(out) + ADP + phosphate + H(+). It catalyses the reaction (6S)-5,6,7,8-tetrahydrofolate(out) + ATP + H2O = (6S)-5,6,7,8-tetrahydrofolate(in) + ADP + phosphate + H(+). In terms of biological role, ATP-dependent transporter of the ATP-binding cassette (ABC) family which transports various molecules including bioamines, neurotransmitters and metabolic intermediates. In the eye and probably in association with w/white, required for the transport of the eye red pigment precursor, guanine, into pigment cell granules. In Malpighian tubules, involved in guanine uptake. Probably in association with w/white, involved in aging-induced intestinal stem cell proliferation in the midgut by regulating tetrahydrofolate transport. This Drosophila virilis (Fruit fly) protein is Protein brown.